Consider the following 89-residue polypeptide: Small ribosomal subunit protein uS15 (89 aa).

The protein belongs to the universal ribosomal protein uS15 family. In terms of assembly, part of the 30S ribosomal subunit. Forms a bridge to the 50S subunit in the 70S ribosome, contacting the 23S rRNA.

Functionally, one of the primary rRNA binding proteins, it binds directly to 16S rRNA where it helps nucleate assembly of the platform of the 30S subunit by binding and bridging several RNA helices of the 16S rRNA. In terms of biological role, forms an intersubunit bridge (bridge B4) with the 23S rRNA of the 50S subunit in the ribosome. This is Small ribosomal subunit protein uS15 from Bacteroides fragilis (strain ATCC 25285 / DSM 2151 / CCUG 4856 / JCM 11019 / LMG 10263 / NCTC 9343 / Onslow / VPI 2553 / EN-2).